A 332-amino-acid polypeptide reads, in one-letter code: Ketol-acid reductoisomerase (NADP(+)) (332 aa).

In terms of domain architecture, KARI N-terminal Rossmann spans 2 to 182; sequence AKVYYDEDAS…GCTRAGLIET (181 aa). Residues 25 to 28, Ser51, Ser53, and 83 to 86 each bind NADP(+); these read YGSQ and DTIQ. Residue His108 is part of the active site. Residue Gly134 participates in NADP(+) binding. The 145-residue stretch at 183–327 folds into the KARI C-terminal knotted domain; the sequence is TFKEETETDL…KELRKMMPWL (145 aa). Residues Asp191, Glu195, Glu227, and Glu231 each coordinate Mg(2+). Ser252 contributes to the substrate binding site.

The protein belongs to the ketol-acid reductoisomerase family. Mg(2+) serves as cofactor.

It carries out the reaction (2R)-2,3-dihydroxy-3-methylbutanoate + NADP(+) = (2S)-2-acetolactate + NADPH + H(+). It catalyses the reaction (2R,3R)-2,3-dihydroxy-3-methylpentanoate + NADP(+) = (S)-2-ethyl-2-hydroxy-3-oxobutanoate + NADPH + H(+). It functions in the pathway amino-acid biosynthesis; L-isoleucine biosynthesis; L-isoleucine from 2-oxobutanoate: step 2/4. It participates in amino-acid biosynthesis; L-valine biosynthesis; L-valine from pyruvate: step 2/4. Its function is as follows. Involved in the biosynthesis of branched-chain amino acids (BCAA). Catalyzes an alkyl-migration followed by a ketol-acid reduction of (S)-2-acetolactate (S2AL) to yield (R)-2,3-dihydroxy-isovalerate. In the isomerase reaction, S2AL is rearranged via a Mg-dependent methyl migration to produce 3-hydroxy-3-methyl-2-ketobutyrate (HMKB). In the reductase reaction, this 2-ketoacid undergoes a metal-dependent reduction by NADPH to yield (R)-2,3-dihydroxy-isovalerate. The sequence is that of Ketol-acid reductoisomerase (NADP(+)) from Persephonella marina (strain DSM 14350 / EX-H1).